The primary structure comprises 117 residues: Large ribosomal subunit protein bL17 (117 aa).

It belongs to the bacterial ribosomal protein bL17 family. As to quaternary structure, part of the 50S ribosomal subunit. Contacts protein L32.

This chain is Large ribosomal subunit protein bL17, found in Endomicrobium trichonymphae.